The sequence spans 1937 residues: Collagen-like protein 7 (1937 aa).

N-linked (GlcNAc...) asparagine; by host glycans are attached at residues asparagine 6 and asparagine 21. Disordered regions lie at residues 88-248 (CKGN…KGDK), 294-531 (NLKG…PDLG), 583-643 (LKGD…NQGV), and 670-1144 (IKGD…DTAT). 5 Collagen-like domains span residues 102–161 (GPKG…KGEK), 168–227 (GEKG…KGDI), 297–356 (GEKG…KGEK), 363–422 (GDKG…IGEK), and 453–512 (GDKG…KGDK). Basic and acidic residues predominate over residues 296–514 (KGEKGDKGNK…DKGDKGDKGD (219 aa)). N-linked (GlcNAc...) asparagine; by host glycosylation occurs at asparagine 515. 3 stretches are compositionally biased toward basic and acidic residues: residues 584-605 (KGDK…KGDK), 614-625 (KGEKGDKGDKGD), and 670-899 (IKGD…KGDK). 5 Collagen-like domains span residues 672–731 (GDKG…KGDK), 735–854 (GNKG…KGNI), 867–926 (GLKG…KGDK), 936–995 (GIKG…KGDK), and 1023–1142 (GSKG…KGDT). N-linked (GlcNAc...) asparagine; by host glycosylation occurs at asparagine 902. Positions 907-1141 (YKGDKGDKGS…DKGDKGDKGD (235 aa)) are enriched in basic and acidic residues. Residues asparagine 1178, asparagine 1192, asparagine 1212, asparagine 1217, asparagine 1245, asparagine 1246, asparagine 1255, asparagine 1317, asparagine 1422, asparagine 1427, asparagine 1432, asparagine 1443, asparagine 1452, asparagine 1477, asparagine 1494, asparagine 1506, asparagine 1513, asparagine 1533, asparagine 1598, asparagine 1619, asparagine 1620, asparagine 1632, asparagine 1641, asparagine 1663, asparagine 1664, asparagine 1672, asparagine 1682, asparagine 1683, asparagine 1732, asparagine 1735, asparagine 1746, asparagine 1756, asparagine 1784, asparagine 1842, and asparagine 1934 are each glycosylated (N-linked (GlcNAc...) asparagine; by host).

May be hydroxylated on lysine by the viral-encoded procollagen-lysine,2-oxoglutarate 5-dioxygenase.

The protein localises to the virion. In terms of biological role, may participate in the formation of a layer of cross-linked glycosylated fibrils at the viral surface thus giving it a hairy-like appearance. The chain is Collagen-like protein 7 from Acanthamoeba polyphaga mimivirus (APMV).